The chain runs to 1904 residues: Pericentriolar material 1 protein (1904 aa).

Disordered regions lie at residues 1 to 135 (MATG…SGEP), 159 to 179 (QEDGRGEPTMDSSQARDPQQE), 265 to 303 (HDSQTQSVPDNRRQAESLSLTREISQSRNSSVSEHQSDE), 338 to 361 (NSSFFPASSSPQRSIDQRSTTSAA), 376 to 407 (NSLASAPYPPDSLASQNESEEDDNLNPTEKLQ), 430 to 489 (SDMM…GTNN), and 520 to 559 (CHNREDDKHADLPHGEDDEVEEDRASEDSMSSHRSSLGDV). Residues 43-60 (RSSEKNKKKLGGEAETRL) are compositionally biased toward basic and acidic residues. Residues 107–118 (INFSDLDQINTN) show a composition bias toward polar residues. Residues 171–212 (SQARDPQQEAKEELENLKKQHDLLKRMLQQQEQLKALQGRQA) adopt a coiled-coil conformation. Positions 280–298 (ESLSLTREISQSRNSSVSE) are enriched in polar residues. Residues 301-334 (SDEKAQLFNKMRMLQGKKQKMDKLLGELHTLRDQ) adopt a coiled-coil conformation. Low complexity predominate over residues 338–348 (NSSFFPASSSP). A compositionally biased stretch (polar residues) spans 349-361 (QRSIDQRSTTSAA). A coiled-coil region spans residues 403 to 429 (TEKLQKLNEVRKRLNELRELVHYYEQT). The span at 442–452 (KEEEETEDSGS) shows a compositional bias: acidic residues. A compositionally biased stretch (polar residues) spans 461–470 (PVTNIRNPQG). Residues 471–482 (ISSWSEINSNSN) are compositionally biased toward low complexity. The segment covering 520–534 (CHNREDDKHADLPHG) has biased composition (basic and acidic residues). Positions 535–544 (EDDEVEEDRA) are enriched in acidic residues. Coiled coils occupy residues 562–592 (DAEFEQKINRLMAAKQKLRQLQNLAAMVQDD) and 636–686 (LNEK…LQSA). The tract at residues 686-706 (AGLGNSPANRQTSPATSTPAM) is disordered. Residues 687–706 (GLGNSPANRQTSPATSTPAM) show a composition bias toward polar residues. Positions 731–768 (SEMRRHEILREELRRRRKQLEALMAEHQRRRELAETIS) form a coiled coil. The segment at 773–840 (SVKSEGSEAQ…PSMNDSFSAY (68 aa)) is disordered. The segment covering 779-804 (SEAQRTPQQSRTENRTMATWGGSTQC) has biased composition (polar residues). Residues 806–830 (LDEEDGDEDGYLSDGLDQAEEEEDA) show a composition bias toward acidic residues. 2 coiled-coil regions span residues 895–927 (SELSYVEEKEQWQEQINQLKKQLEFSVSICQTL) and 970–1000 (TQLSWQQNNVQRLKQMLNDLMHQQEQQCQEK). Disordered stretches follow at residues 991 to 1018 (HQQEQQCQEKPSRKERGSSAPPPPSPVF), 1063 to 1082 (GFPQSSEQQQHPLDHNASGK), and 1088 to 1225 (FPKP…TGYD). 2 stretches are compositionally biased toward polar residues: residues 1064–1073 (FPQSSEQQQH) and 1093–1102 (ESSSSTGAEN). Residues 1103-1117 (QRSHRQPEDEVEKRS) are compositionally biased toward basic and acidic residues. Over residues 1141–1150 (SVQSIASGHK) the composition is skewed to polar residues. The span at 1151–1162 (NQSDTSRRRNFD) shows a compositional bias: basic and acidic residues. The segment covering 1173–1182 (PDPVDPTTVT) has biased composition (low complexity). A coiled-coil region spans residues 1421–1447 (IHLDQALARMREYERMKIEAESTLDSE). A compositionally biased stretch (basic and acidic residues) spans 1616 to 1625 (AKEDKDETET). Disordered stretches follow at residues 1616–1741 (AKED…VKGE), 1774–1838 (MKTE…SDED), and 1865–1904 (EAQTNSLSDELLGGGGEQDRELVGDAQTLKEPETFGAQSA). A compositionally biased stretch (acidic residues) spans 1649–1658 (SDQEEDEESE). The segment covering 1668–1678 (KAETQALTNYG) has biased composition (polar residues). Residues 1680 to 1695 (GEDENEDEEIEFEEGP) show a composition bias toward acidic residues. Composition is skewed to polar residues over residues 1698–1720 (VQTSLQASSETATENEQISSQEL), 1728–1737 (ILSSEQQSVN), and 1779–1791 (SSSSLPGNETQML). Positions 1800–1812 (SSAGSSESSMAGS) are enriched in low complexity. Residues 1881-1897 (EQDRELVGDAQTLKEPE) are compositionally biased toward basic and acidic residues.

This sequence belongs to the PCM1 family. As to quaternary structure, self-associates.

The protein localises to the cytoplasm. The protein resides in the cytoskeleton. It localises to the microtubule organizing center. Its subcellular location is the centrosome. It is found in the cytoplasmic granule. The protein localises to the centriolar satellite. The protein resides in the cilium basal body. Its function is as follows. Required for centrosome assembly and function. Essential for the correct localization of several centrosomal proteins including CETN3 and PCNT. Required to anchor microtubules to the centrosome. Probably involved in the biogenesis of cilia. The polypeptide is Pericentriolar material 1 protein (PCM1) (Gallus gallus (Chicken)).